We begin with the raw amino-acid sequence, 1780 residues long: Chitin synthase Vb (1780 aa).

6 N-linked (GlcNAc...) asparagine glycosylation sites follow: Asn-133, Asn-153, Asn-629, Asn-644, Asn-655, and Asn-660. The next 2 helical transmembrane spans lie at 740 to 760 and 776 to 796; these read AWIA…LKFI and FVLF…IIGF. Residues 805–866 form the Cytochrome b5 heme-binding domain; sequence NKAWNVKEVA…LSGMVMDNYF (62 aa). Residues Asn-888 and Asn-1009 are each glycosylated (N-linked (GlcNAc...) asparagine). The helical transmembrane segment at 1046–1066 threads the bilayer; that stretch reads LLLAFAIIICIVTAVKFLAAL. Asn-1411 carries N-linked (GlcNAc...) asparagine glycosylation. The next 3 membrane-spanning stretches (helical) occupy residues 1442–1462, 1469–1489, and 1497–1517; these read LCGT…IYIL, IPYI…LIFI, and IGWM…LPLY. Asn-1524 carries N-linked (GlcNAc...) asparagine glycosylation. The tract at residues 1649 to 1691 is disordered; it reads TGVHDMRSQSPYQDYPGQHPSVSNLRGQANLSPATGGGHSRSG. The segment covering 1668-1681 has biased composition (polar residues); the sequence is PSVSNLRGQANLSP. The 57-residue stretch at 1722–1778 folds into the DEK-C domain; that stretch reads GPNDMAIVESIRSVLCEVDLDTVTKKQVRALVEQRLQTELVGERRTFMDRQIDHELE.

This sequence belongs to the chitin synthase family. Class VII subfamily.

The protein localises to the cell membrane. It catalyses the reaction [(1-&gt;4)-N-acetyl-beta-D-glucosaminyl](n) + UDP-N-acetyl-alpha-D-glucosamine = [(1-&gt;4)-N-acetyl-beta-D-glucosaminyl](n+1) + UDP + H(+). Polymerizes chitin, a structural polymer of the cell wall and septum, by transferring the sugar moiety of UDP-GlcNAc to the non-reducing end of the growing chitin polymer. ChsV and chsVb do perform additive, but not redundant, functions in septum formation. Functions not only in the maintenance of cell wall integrity under different osmotic conditions but also in polarized cell wall synthesis. Plays an important role in the complex infection process of this fungus. This Fusarium oxysporum f. sp. lycopersici (strain 4287 / CBS 123668 / FGSC 9935 / NRRL 34936) (Fusarium vascular wilt of tomato) protein is Chitin synthase Vb.